A 266-amino-acid polypeptide reads, in one-letter code: Probable catechol O-methyltransferase 1 (266 aa).

S-adenosyl-L-methionine is bound by residues Ile-56, Glu-78, Ser-86, Glu-106, Val-107, Ala-135, and Asp-162. Residue Asp-162 participates in Mg(2+) binding. Position 165 (Lys-165) interacts with substrate. Mg(2+) is bound by residues Asp-190 and Asn-191. Substrate is bound at residue Asn-191.

The protein belongs to the class I-like SAM-binding methyltransferase superfamily. Cation-dependent O-methyltransferase family. Mg(2+) is required as a cofactor.

The protein resides in the cytoplasm. It localises to the nucleus. It carries out the reaction a catechol + S-adenosyl-L-methionine = a guaiacol + S-adenosyl-L-homocysteine + H(+). This is Probable catechol O-methyltransferase 1 from Schizosaccharomyces pombe (strain 972 / ATCC 24843) (Fission yeast).